We begin with the raw amino-acid sequence, 241 residues long: Phosducin-like protein 2 (241 aa).

One can recognise a Phosducin domain in the interval Val-34–Ile-202. The tract at residues Phe-89–Lys-241 is thioredoxin fold.

It belongs to the phosducin family. In terms of assembly, interacts with the CCT chaperonin complex and actin. As to expression, testis-specific.

It localises to the endoplasmic reticulum. Functionally, essential for male fertility, spermiogenesis and acrosome formation. The chain is Phosducin-like protein 2 (PDCL2) from Homo sapiens (Human).